We begin with the raw amino-acid sequence, 289 residues long: Pteridine reductase 1 (289 aa).

14 to 41 is a binding site for NADP(+); the sequence is GAAKRLGSSIAEALHAEGYTVCLHYHRS. S176 contacts substrate. The Proton acceptor role is filled by Y195. 195–199 contributes to the NADP(+) binding site; sequence YTMAK.

The protein belongs to the short-chain dehydrogenases/reductases (SDR) family. In terms of assembly, homotetramer.

The catalysed reaction is (6R)-L-erythro-5,6,7,8-tetrahydrobiopterin + 2 NADP(+) = L-erythro-biopterin + 2 NADPH + 2 H(+). It functions in the pathway cofactor biosynthesis; tetrahydrobiopterin biosynthesis; tetrahydrobiopterin from biopterin: step 1/1. Its function is as follows. Exhibits a NADPH-dependent biopterin reductase activity. Has good activity with folate and significant activity with dihydrofolate and dihydrobiopterin, but not with quinonoid dihydrobiopterin. Confers resistance to methotrexate (MTX). This chain is Pteridine reductase 1 (PTR1), found in Leishmania tarentolae (Sauroleishmania tarentolae).